The primary structure comprises 157 residues: Protein Smg homolog (157 aa).

This sequence belongs to the Smg family.

This is Protein Smg homolog from Shewanella loihica (strain ATCC BAA-1088 / PV-4).